The primary structure comprises 402 residues: Speedy protein E2 (402 aa).

Positions 1–89 (MDRTETRFRK…EEPEKELAPE (89 aa)) are disordered. The segment covering 16–39 (GKITTSRQPHPQNEQSPQRSTSGY) has biased composition (polar residues). Residues 76–89 (DESEEEPEKELAPE) are compositionally biased toward acidic residues.

Belongs to the Speedy/Ringo family.

This chain is Speedy protein E2 (SPDYE2), found in Homo sapiens (Human).